The sequence spans 632 residues: Arginine--tRNA ligase (632 aa).

The 'HIGH' region signature appears at 129–139 (ANPVHPLHVGS).

Belongs to the class-I aminoacyl-tRNA synthetase family.

The protein resides in the cytoplasm. The enzyme catalyses tRNA(Arg) + L-arginine + ATP = L-arginyl-tRNA(Arg) + AMP + diphosphate. This Korarchaeum cryptofilum (strain OPF8) protein is Arginine--tRNA ligase.